The primary structure comprises 122 residues: Large ribosomal subunit protein uL14c (122 aa).

It belongs to the universal ribosomal protein uL14 family. In terms of assembly, part of the 50S ribosomal subunit.

It is found in the plastid. The protein resides in the chloroplast. Functionally, binds to 23S rRNA. This chain is Large ribosomal subunit protein uL14c, found in Physcomitrium patens (Spreading-leaved earth moss).